Reading from the N-terminus, the 143-residue chain is Brain ribonuclease (143 aa).

The interval 1 to 21 is disordered; that stretch reads KESAAAKFRRQHMDSGSSSSG. 2 residues coordinate substrate: Lys-7 and Arg-10. His-12 acts as the Proton acceptor in catalysis. Cystine bridges form between Cys-26–Cys-84, Cys-40–Cys-95, Cys-58–Cys-110, and Cys-65–Cys-72. 41-45 contacts substrate; the sequence is KPVNT. Asn-62 carries an N-linked (GlcNAc...) asparagine glycan. Positions 66 and 85 each coordinate substrate. His-119 functions as the Proton donor in the catalytic mechanism. Residue Thr-129 is glycosylated (O-linked (GalNAc...) threonine). The O-linked (GalNAc...) serine glycan is linked to Ser-133.

The protein belongs to the pancreatic ribonuclease family.

Its subcellular location is the secreted. The polypeptide is Brain ribonuclease (BRN) (Ovis aries (Sheep)).